Here is a 258-residue protein sequence, read N- to C-terminus: Acyl-[acyl-carrier-protein]--UDP-N-acetylglucosamine O-acyltransferase (258 aa).

This sequence belongs to the transferase hexapeptide repeat family. LpxA subfamily. Homotrimer.

Its subcellular location is the cytoplasm. It carries out the reaction a (3R)-hydroxyacyl-[ACP] + UDP-N-acetyl-alpha-D-glucosamine = a UDP-3-O-[(3R)-3-hydroxyacyl]-N-acetyl-alpha-D-glucosamine + holo-[ACP]. It functions in the pathway glycolipid biosynthesis; lipid IV(A) biosynthesis; lipid IV(A) from (3R)-3-hydroxytetradecanoyl-[acyl-carrier-protein] and UDP-N-acetyl-alpha-D-glucosamine: step 1/6. Involved in the biosynthesis of lipid A, a phosphorylated glycolipid that anchors the lipopolysaccharide to the outer membrane of the cell. This chain is Acyl-[acyl-carrier-protein]--UDP-N-acetylglucosamine O-acyltransferase, found in Thiobacillus denitrificans (strain ATCC 25259 / T1).